The following is a 449-amino-acid chain: MAHISFDSSNVADFVHENELAEIQPLVTAADQILRDGSGAGSDFRGWIDLPSNYDKDEFARIKKAADKIRNDSEVFVAIGIGGSYLGARAAIDFLNNTFYNLLTKEQRNGAPQVIFAGNSISSTYLADVLNLIGDRDFSINVISKSGTTTEPAIAFRVLKEKLIKKYGEEEAKKRIYATTDRAKGALKTEADAENYEEFVVPDDIGGRFSVLSAVGLLPIAVAGGDIDQLMKGAEDASNEYKDADVTKNEAYKYAALRNILYRKGYTTELLENYEPTLQYFGEWWKQLMGESEGKDQKGIYPSSANFSTDLHSLGQYIQEGRRNLMETVINVEKPNHDIDIPKADQDLDGLRYLEGRTMDEVNKKAYQGVTLAHNDGGVPVMTVNIPDQTAYTLGYMIYFFEAAVAVSGYLNGINPFNQPGVEAYKSNMFALLGKPGYEDKTAELNARL.

Catalysis depends on Glu291, which acts as the Proton donor. Active-site residues include His312 and Lys426.

This sequence belongs to the GPI family.

It is found in the cytoplasm. The catalysed reaction is alpha-D-glucose 6-phosphate = beta-D-fructose 6-phosphate. It participates in carbohydrate biosynthesis; gluconeogenesis. The protein operates within carbohydrate degradation; glycolysis; D-glyceraldehyde 3-phosphate and glycerone phosphate from D-glucose: step 2/4. In terms of biological role, catalyzes the reversible isomerization of glucose-6-phosphate to fructose-6-phosphate. In Pediococcus pentosaceus (strain ATCC 25745 / CCUG 21536 / LMG 10740 / 183-1w), this protein is Glucose-6-phosphate isomerase.